Reading from the N-terminus, the 446-residue chain is Putative hydrolase YbfO (446 aa).

Residues 1 to 28 (MKRMIVRMTLPLLIVCLAFSSFSASARA) form the signal peptide.

The chain is Putative hydrolase YbfO (ybfO) from Bacillus subtilis (strain 168).